The following is a 351-amino-acid chain: Bifunctional UDP-glucose 4-epimerase and UDP-xylose 4-epimerase 3 (351 aa).

8 to 39 (NILVTGGAGFIGTHTVVQLLNQGFKVTIIDNL) provides a ligand contact to NAD(+). Substrate is bound at residue serine 134. The Proton acceptor role is filled by tyrosine 158.

This sequence belongs to the NAD(P)-dependent epimerase/dehydratase family. As to quaternary structure, homodimer. Heterodimer. It depends on NAD(+) as a cofactor. In terms of tissue distribution, ubiquitous.

It catalyses the reaction UDP-alpha-D-glucose = UDP-alpha-D-galactose. The enzyme catalyses UDP-beta-L-arabinopyranose = UDP-alpha-D-xylose. The protein operates within carbohydrate metabolism; galactose metabolism. It participates in nucleotide-sugar biosynthesis; UDP-L-arabinose biosynthesis; UDP-L-arabinose from UDP-alpha-D-xylose: step 1/1. Its pathway is cell wall biogenesis; cell wall polysaccharide biosynthesis. Strongly inhibited by UDP. In terms of biological role, catalyzes the interconversion between UDP-glucose and UDP-galactose and the interconversion between UDP-arabinose and UDP-xylose. Cooperates with UGE2 in pollen development. May preferentially act in the UDP-galactose to UDP-glucose direction, therefore displaying a role in carbohydrate catabolism. The polypeptide is Bifunctional UDP-glucose 4-epimerase and UDP-xylose 4-epimerase 3 (UGE3) (Arabidopsis thaliana (Mouse-ear cress)).